Consider the following 859-residue polypeptide: Ribose import ATP-binding protein RbsA 1 (859 aa).

Positions 1-351 are disordered; it reads MRASLENGDD…AARAPDEASE (351 aa). Residues 1–353 are unknown; the sequence is MRASLENGDD…RAPDEASEEA (353 aa). A compositionally biased stretch (basic and acidic residues) spans 8 to 17; it reads GDDHDAHRLV. Residues 28-43 are compositionally biased toward basic residues; sequence RAARRRAFARARRGER. 3 stretches are compositionally biased toward basic and acidic residues: residues 44–80, 89–129, and 137–167; these read RARGTAEDRHDVPGAEQPVLRDDAKGARRGGRVDRRA, RREQ…EEGG, and RERERPGRRVRRLEEFRRGRDVVRLPREGDR. Basic residues predominate over residues 168-179; sequence RRRRSRDPRRHP. 5 stretches are compositionally biased toward basic and acidic residues: residues 193-214, 239-250, 263-281, 288-301, and 308-323; these read GAREIPEREDRRRAERQAGARE, RLDGRAVRDRGV, AGGDRGDAEAELEVHRDVR, DSPRDRHRAREEVG, and DSGRREADRQGQREDV. ABC transporter domains are found at residues 358–594 and 607–851; these read LALT…VGRR and RDAA…TSDV. 390–397 contributes to the ATP binding site; that stretch reads GENGAGKS.

This sequence belongs to the ABC transporter superfamily. Ribose importer (TC 3.A.1.2.1) family. As to quaternary structure, the complex is composed of an ATP-binding protein (RbsA), two transmembrane proteins (RbsC) and a solute-binding protein (RbsB).

It is found in the cell inner membrane. The catalysed reaction is D-ribose(out) + ATP + H2O = D-ribose(in) + ADP + phosphate + H(+). Part of the ABC transporter complex RbsABC involved in ribose import. Responsible for energy coupling to the transport system. This is Ribose import ATP-binding protein RbsA 1 from Burkholderia pseudomallei (strain 1710b).